The chain runs to 425 residues: Elongation factor 1-alpha (425 aa).

The region spanning 5-221 (KPHMNLAVIG…NALSEPEKPT (217 aa)) is the tr-type G domain. The G1 stretch occupies residues 14–21 (GHIDHGKS). Position 14-21 (14-21 (GHIDHGKS)) interacts with GTP. Ser21 provides a ligand contact to Mg(2+). Positions 70–74 (GITID) are G2. A G3 region spans residues 91–94 (DCPG). GTP-binding positions include 91-95 (DCPGH) and 146-149 (NKMD). The G4 stretch occupies residues 146–149 (NKMD). A G5 region spans residues 185 to 187 (SAF).

The protein belongs to the TRAFAC class translation factor GTPase superfamily. Classic translation factor GTPase family. EF-Tu/EF-1A subfamily.

The protein resides in the cytoplasm. It carries out the reaction GTP + H2O = GDP + phosphate + H(+). GTP hydrolase that promotes the GTP-dependent binding of aminoacyl-tRNA to the A-site of ribosomes during protein biosynthesis. The sequence is that of Elongation factor 1-alpha from Methanoculleus marisnigri (strain ATCC 35101 / DSM 1498 / JR1).